The primary structure comprises 156 residues: 6,7-dimethyl-8-ribityllumazine synthase (156 aa).

5-amino-6-(D-ribitylamino)uracil contacts are provided by residues tryptophan 22, 56–58 (AYE), and 80–82 (AVI). A (2S)-2-hydroxy-3-oxobutyl phosphate-binding site is contributed by 85 to 86 (DT). The active-site Proton donor is the histidine 88. Residue phenylalanine 113 participates in 5-amino-6-(D-ribitylamino)uracil binding. Arginine 127 is a binding site for (2S)-2-hydroxy-3-oxobutyl phosphate.

This sequence belongs to the DMRL synthase family.

The enzyme catalyses (2S)-2-hydroxy-3-oxobutyl phosphate + 5-amino-6-(D-ribitylamino)uracil = 6,7-dimethyl-8-(1-D-ribityl)lumazine + phosphate + 2 H2O + H(+). It functions in the pathway cofactor biosynthesis; riboflavin biosynthesis; riboflavin from 2-hydroxy-3-oxobutyl phosphate and 5-amino-6-(D-ribitylamino)uracil: step 1/2. In terms of biological role, catalyzes the formation of 6,7-dimethyl-8-ribityllumazine by condensation of 5-amino-6-(D-ribitylamino)uracil with 3,4-dihydroxy-2-butanone 4-phosphate. This is the penultimate step in the biosynthesis of riboflavin. The chain is 6,7-dimethyl-8-ribityllumazine synthase from Deinococcus deserti (strain DSM 17065 / CIP 109153 / LMG 22923 / VCD115).